A 289-amino-acid polypeptide reads, in one-letter code: 4-diphosphocytidyl-2-C-methyl-D-erythritol kinase (289 aa).

The active site involves lysine 16. 99–109 (PMGGGIGGGSS) contacts ATP. Aspartate 141 is an active-site residue.

Belongs to the GHMP kinase family. IspE subfamily.

It catalyses the reaction 4-CDP-2-C-methyl-D-erythritol + ATP = 4-CDP-2-C-methyl-D-erythritol 2-phosphate + ADP + H(+). Its pathway is isoprenoid biosynthesis; isopentenyl diphosphate biosynthesis via DXP pathway; isopentenyl diphosphate from 1-deoxy-D-xylulose 5-phosphate: step 3/6. In terms of biological role, catalyzes the phosphorylation of the position 2 hydroxy group of 4-diphosphocytidyl-2C-methyl-D-erythritol. The sequence is that of 4-diphosphocytidyl-2-C-methyl-D-erythritol kinase from Ralstonia nicotianae (strain ATCC BAA-1114 / GMI1000) (Ralstonia solanacearum).